The primary structure comprises 148 residues: MTIADNKKAFFDYFIEERYEAGMALEGWEVKAIRANRAQIKEGYVVIRNAELFLIGAHISPLQSASTHVHPDPVRTRKLLLHAEEIKKLIGKVEQRGYTLVPLNLHYTRGRVKCEIGLAKGKKQFDKRETEKDRDWQREKARLMREKA.

A disordered region spans residues 124–148 (QFDKRETEKDRDWQREKARLMREKA).

It belongs to the SmpB family.

It localises to the cytoplasm. Its function is as follows. Required for rescue of stalled ribosomes mediated by trans-translation. Binds to transfer-messenger RNA (tmRNA), required for stable association of tmRNA with ribosomes. tmRNA and SmpB together mimic tRNA shape, replacing the anticodon stem-loop with SmpB. tmRNA is encoded by the ssrA gene; the 2 termini fold to resemble tRNA(Ala) and it encodes a 'tag peptide', a short internal open reading frame. During trans-translation Ala-aminoacylated tmRNA acts like a tRNA, entering the A-site of stalled ribosomes, displacing the stalled mRNA. The ribosome then switches to translate the ORF on the tmRNA; the nascent peptide is terminated with the 'tag peptide' encoded by the tmRNA and targeted for degradation. The ribosome is freed to recommence translation, which seems to be the essential function of trans-translation. The protein is SsrA-binding protein of Ralstonia pickettii (strain 12J).